The chain runs to 633 residues: Probable potassium transport system protein Kup (633 aa).

The next 12 membrane-spanning stretches (helical) occupy residues 21 to 41, 61 to 81, 107 to 127, 145 to 165, 176 to 196, 219 to 239, 255 to 275, 293 to 313, 345 to 365, 371 to 391, 402 to 422, and 427 to 447; these read LAVG…LYAF, LVSL…VLFL, TAVL…DAMI, PTLS…LFAI, FFGP…IMHI, GFLG…AEAL, WFVL…ALVL, ALLP…QAVI, IFLP…VLSF, LATA…IMAF, LPMA…FLGA, and IHDG…IMWT.

The protein belongs to the HAK/KUP transporter (TC 2.A.72) family.

The protein localises to the cell inner membrane. It catalyses the reaction K(+)(in) + H(+)(in) = K(+)(out) + H(+)(out). Its function is as follows. Transport of potassium into the cell. Likely operates as a K(+):H(+) symporter. The chain is Probable potassium transport system protein Kup from Rhizobium rhizogenes (strain K84 / ATCC BAA-868) (Agrobacterium radiobacter).